The sequence spans 341 residues: MKALSKLKAEEGIWMTDVPEPEVGHNDLLIKIRKTAICGTDVHIYNWDEWSQKTIPVPMVVGHEYVGEVVGIGQEVKGFKIGDRVSGEGHITCGHCRNCRGGRTHLCRNTTGVGVNRPGCFAEYLVIPAFNAFKIPDNISDDLASIFDPFGNAVHTALSFDLVGEDVLVSGAGPIGVMAAAVAKHVGARHVVITDVNEYRLELARKMGVTRAVNVAKESLNDVMAELGMTEGFDVGLEMSGAPPAFRTMLDTMNHGGRIAMLGIPPSDMSIDWTKVIFKGLFIKGIYGREMFETWYKMAALIQSGLDLSPIITHRFSVDDFQKGFDAMCSGQSGKVILSWD.

Zn(2+) is bound at residue Cys-38. Residues Thr-40 and His-43 each act as charge relay system in the active site. 6 residues coordinate Zn(2+): His-63, Glu-64, Cys-93, Cys-96, Cys-99, and Cys-107. NAD(+)-binding positions include Ile-175, Asp-195, Arg-200, 262-264 (LGI), and 286-287 (IY).

This sequence belongs to the zinc-containing alcohol dehydrogenase family. In terms of assembly, homotetramer. Zn(2+) is required as a cofactor.

The protein localises to the cytoplasm. It catalyses the reaction L-threonine + NAD(+) = (2S)-2-amino-3-oxobutanoate + NADH + H(+). Its pathway is amino-acid degradation; L-threonine degradation via oxydo-reductase pathway; glycine from L-threonine: step 1/2. Functionally, catalyzes the NAD(+)-dependent oxidation of L-threonine to 2-amino-3-ketobutyrate. This chain is L-threonine 3-dehydrogenase, found in Salmonella typhi.